A 204-amino-acid chain; its full sequence is Glycerol-3-phosphate acyltransferase (204 aa).

Helical transmembrane passes span 12-32, 85-105, 117-137, 142-162, and 163-183; these read LVMG…HWLA, WQVA…WLGW, MLLG…LTVL, IVSL…ILRF, and QGNS…MVVW.

It belongs to the PlsY family. As to quaternary structure, probably interacts with PlsX.

Its subcellular location is the cell inner membrane. The enzyme catalyses an acyl phosphate + sn-glycerol 3-phosphate = a 1-acyl-sn-glycero-3-phosphate + phosphate. It functions in the pathway lipid metabolism; phospholipid metabolism. Its function is as follows. Catalyzes the transfer of an acyl group from acyl-phosphate (acyl-PO(4)) to glycerol-3-phosphate (G3P) to form lysophosphatidic acid (LPA). This enzyme utilizes acyl-phosphate as fatty acyl donor, but not acyl-CoA or acyl-ACP. This chain is Glycerol-3-phosphate acyltransferase, found in Prochlorococcus marinus (strain MIT 9313).